Reading from the N-terminus, the 125-residue chain is Basic leucine zipper transcriptional factor ATF-like (125 aa).

Positions 1 to 14 are enriched in low complexity; that stretch reads MPHSSDSSDSSFSR. Residues 1–59 are disordered; it reads MPHSSDSSDSSFSRSPPPGKQDSSDDVRKVQRREKNRIAAQKSRQRQTQKADTLHLESE. A bZIP domain is found at 26–89; the sequence is DVRKVQRREK…KYFTSVLSSH (64 aa). Positions 28–50 are basic motif; that stretch reads RKVQRREKNRIAAQKSRQRQTQK. Position 43 is a phosphoserine (serine 43). Phosphothreonine is present on threonine 48. Residues 54–75 form a leucine-zipper region; it reads LHLESEDLEKQNAALRKEIKQL.

Belongs to the bZIP family. Heterodimer; mainly heterodimerizes with JUNB. The BATF-JUNB heterodimer interacts with IRF4 and IRF8. Interacts (via bZIP domain) with IRF4 and IRF8; the interaction is direct. Also forms heterodimers with JUN and JUND. Interacts with IFI35. Phosphorylated on serine and threonine residues and at least one tyrosine residue. Phosphorylation at Ser-43 inhibit DNA binding activity and transforms it as a negative regulator of AP-1 mediated transcription. As to expression, detected in postnatal and adult lymphoid tissues such as thymus, spleen and lymph nodes. In thymus most concentrated expression is found in the immediate cortical layer. Differentially expressed during T-cell development in thymus. Highly expressed in Th17, Th1 and Th2 cells and in activated B-cells.

It is found in the nucleus. Its subcellular location is the cytoplasm. AP-1 family transcription factor that controls the differentiation of lineage-specific cells in the immune system: specifically mediates the differentiation of T-helper 17 cells (Th17), follicular T-helper cells (TfH), CD8(+) dendritic cells and class-switch recombination (CSR) in B-cells. Acts via the formation of a heterodimer with JUNB that recognizes and binds DNA sequence 5'-TGA[CG]TCA-3'. The BATF-JUNB heterodimer also forms a complex with IRF4 (or IRF8) in immune cells, leading to recognition of AICE sequence (5'-TGAnTCA/GAAA-3'), an immune-specific regulatory element, followed by cooperative binding of BATF and IRF4 (or IRF8) and activation of genes. Controls differentiation of T-helper cells producing interleukin-17 (Th17 cells) by binding to Th17-associated gene promoters: regulates expression of the transcription factor RORC itself and RORC target genes such as IL17 (IL17A or IL17B). Also involved in differentiation of follicular T-helper cells (TfH) by directing expression of BCL6 and MAF. In B-cells, involved in class-switch recombination (CSR) by controlling the expression of both AICDA and of germline transcripts of the intervening heavy-chain region and constant heavy-chain region (I(H)-C(H)). Following infection, can participate in CD8(+) dendritic cell differentiation via interaction with IRF4 and IRF8 to mediate cooperative gene activation. Regulates effector CD8(+) T-cell differentiation by regulating expression of SIRT1. Following DNA damage, part of a differentiation checkpoint that limits self-renewal of hematopoietic stem cells (HSCs): up-regulated by STAT3, leading to differentiation of HSCs, thereby restricting self-renewal of HSCs. In Mus musculus (Mouse), this protein is Basic leucine zipper transcriptional factor ATF-like (Batf).